A 337-amino-acid polypeptide reads, in one-letter code: Phenylalanine--tRNA ligase alpha subunit (337 aa).

Mg(2+) is bound at residue Glu-252.

This sequence belongs to the class-II aminoacyl-tRNA synthetase family. Phe-tRNA synthetase alpha subunit type 1 subfamily. Tetramer of two alpha and two beta subunits. The cofactor is Mg(2+).

It is found in the cytoplasm. The catalysed reaction is tRNA(Phe) + L-phenylalanine + ATP = L-phenylalanyl-tRNA(Phe) + AMP + diphosphate + H(+). The chain is Phenylalanine--tRNA ligase alpha subunit from Francisella tularensis subsp. holarctica (strain OSU18).